A 232-amino-acid polypeptide reads, in one-letter code: Ubiquinone biosynthesis O-methyltransferase (232 aa).

Arginine 36, glycine 55, aspartate 76, and leucine 120 together coordinate S-adenosyl-L-methionine.

This sequence belongs to the methyltransferase superfamily. UbiG/COQ3 family.

The enzyme catalyses a 3-demethylubiquinol + S-adenosyl-L-methionine = a ubiquinol + S-adenosyl-L-homocysteine + H(+). It catalyses the reaction a 3-(all-trans-polyprenyl)benzene-1,2-diol + S-adenosyl-L-methionine = a 2-methoxy-6-(all-trans-polyprenyl)phenol + S-adenosyl-L-homocysteine + H(+). It participates in cofactor biosynthesis; ubiquinone biosynthesis. Functionally, O-methyltransferase that catalyzes the 2 O-methylation steps in the ubiquinone biosynthetic pathway. In Pseudomonas putida (strain GB-1), this protein is Ubiquinone biosynthesis O-methyltransferase.